A 232-amino-acid polypeptide reads, in one-letter code: Aprataxin-like protein (232 aa).

An HIT domain is found at 38–160 (LKVYIESPES…MTLDHVSPSL (123 aa)). Interaction with DNA regions lie at residues 63 to 67 (DMFPK), 138 to 149 (HAGPSMNNLHLH), and 161 to 165 (KNSAH). Residue His-147 is the Nucleophile of the active site. Zn(2+)-binding residues include Cys-200 and Cys-203. The segment at 209-212 (RHFT) is interaction with DNA. Residues His-217 and Glu-221 each contribute to the Zn(2+) site.

Monomer.

Its subcellular location is the nucleus. The protein localises to the cytoplasm. The enzyme catalyses a 5'-end adenosine-5'-diphospho-5'-2'-deoxyribonucleoside-DNA + H2O = a 5'-end 5'-phospho-2'-deoxyribonucleoside-DNA + AMP + 2 H(+). It carries out the reaction a 5'-end adenosine-5'-diphospho-5'-ribonucleoside-2'-deoxyribonucleotide-DNA + H2O = a 5'-end 5'-phospho-ribonucleoside-2'-deoxyribonucleotide-DNA + AMP + 2 H(+). It catalyses the reaction a 3'-end 2'-deoxyribonucleotide-3'-diphospho-5'-guanosine-DNA + H2O = a 3'-end 2'-deoxyribonucleotide 3'-phosphate-DNA + GMP + 2 H(+). Functionally, DNA-binding protein involved in single-strand DNA break repair, double-strand DNA break repair and base excision repair. Resolves abortive DNA ligation intermediates formed either at base excision sites, or when DNA ligases attempt to repair non-ligatable breaks induced by reactive oxygen species. Catalyzes the release of adenylate groups covalently linked to 5'-phosphate termini, resulting in the production of 5'-phosphate termini that can be efficiently rejoined. Likewise, catalyzes the release of 3'-linked guanosine (DNAppG) and inosine (DNAppI) from DNA, but has higher specific activity with 5'-linked adenosine (AppDNA). In Schizosaccharomyces pombe (strain 972 / ATCC 24843) (Fission yeast), this protein is Aprataxin-like protein (hnt3).